The sequence spans 537 residues: CTP synthase (537 aa).

The tract at residues 1–268 (MPFKCIFLTG…STFITEKLGL (268 aa)) is amidoligase domain. Residue Ser14 coordinates CTP. Ser14 is a binding site for UTP. 15–20 (SLGKGL) provides a ligand contact to ATP. Tyr55 provides a ligand contact to L-glutamine. Asp72 provides a ligand contact to ATP. Residues Asp72 and Glu142 each coordinate Mg(2+). Residues 149–151 (DIE), 188–193 (KTKPTQ), and Lys224 contribute to the CTP site. Residues 188–193 (KTKPTQ) and Lys224 contribute to the UTP site. One can recognise a Glutamine amidotransferase type-1 domain in the interval 294-533 (RIGLVGKYVQ…IQAALLYSKN (240 aa)). An L-glutamine-binding site is contributed by Gly353. The Nucleophile; for glutamine hydrolysis role is filled by Cys380. Residues 381–384 (LGMQ), Glu404, and Arg461 each bind L-glutamine. Active-site residues include His506 and Glu508.

This sequence belongs to the CTP synthase family. Homotetramer.

It carries out the reaction UTP + L-glutamine + ATP + H2O = CTP + L-glutamate + ADP + phosphate + 2 H(+). The catalysed reaction is L-glutamine + H2O = L-glutamate + NH4(+). The enzyme catalyses UTP + NH4(+) + ATP = CTP + ADP + phosphate + 2 H(+). It participates in pyrimidine metabolism; CTP biosynthesis via de novo pathway; CTP from UDP: step 2/2. Its activity is regulated as follows. Allosterically activated by GTP, when glutamine is the substrate; GTP has no effect on the reaction when ammonia is the substrate. The allosteric effector GTP functions by stabilizing the protein conformation that binds the tetrahedral intermediate(s) formed during glutamine hydrolysis. Inhibited by the product CTP, via allosteric rather than competitive inhibition. Catalyzes the ATP-dependent amination of UTP to CTP with either L-glutamine or ammonia as the source of nitrogen. Regulates intracellular CTP levels through interactions with the four ribonucleotide triphosphates. The chain is CTP synthase from Chlamydia caviae (strain ATCC VR-813 / DSM 19441 / 03DC25 / GPIC) (Chlamydophila caviae).